Consider the following 337-residue polypeptide: Ketol-acid reductoisomerase (NADP(+)) (337 aa).

The KARI N-terminal Rossmann domain maps to 1–180 (MFYEKDADVD…GGGKSGIIET (180 aa)). Residues 22 to 25 (YGSQ), Arg46, Ser49, Ser51, and 81 to 84 (DELQ) each bind NADP(+). Residue His106 is part of the active site. Gly132 contacts NADP(+). One can recognise a KARI C-terminal knotted domain in the interval 181–326 (TFKDECETDL…AELRAMMPWI (146 aa)). Mg(2+) is bound by residues Asp189, Glu193, Glu225, and Glu229. Ser250 contributes to the substrate binding site.

Belongs to the ketol-acid reductoisomerase family. Mg(2+) serves as cofactor.

It catalyses the reaction (2R)-2,3-dihydroxy-3-methylbutanoate + NADP(+) = (2S)-2-acetolactate + NADPH + H(+). It carries out the reaction (2R,3R)-2,3-dihydroxy-3-methylpentanoate + NADP(+) = (S)-2-ethyl-2-hydroxy-3-oxobutanoate + NADPH + H(+). The protein operates within amino-acid biosynthesis; L-isoleucine biosynthesis; L-isoleucine from 2-oxobutanoate: step 2/4. It participates in amino-acid biosynthesis; L-valine biosynthesis; L-valine from pyruvate: step 2/4. Its function is as follows. Involved in the biosynthesis of branched-chain amino acids (BCAA). Catalyzes an alkyl-migration followed by a ketol-acid reduction of (S)-2-acetolactate (S2AL) to yield (R)-2,3-dihydroxy-isovalerate. In the isomerase reaction, S2AL is rearranged via a Mg-dependent methyl migration to produce 3-hydroxy-3-methyl-2-ketobutyrate (HMKB). In the reductase reaction, this 2-ketoacid undergoes a metal-dependent reduction by NADPH to yield (R)-2,3-dihydroxy-isovalerate. The protein is Ketol-acid reductoisomerase (NADP(+)) of Pelagibacter ubique (strain HTCC1062).